The following is a 301-amino-acid chain: UBX domain-containing protein 2 (301 aa).

Positions 1-61 (MSRNIRTFRD…AARGPDSEAH (61 aa)) are disordered. An SEP domain is found at 89–153 (TISLTLHLWS…KVNRHHEEYV (65 aa)). Residues 176–200 (GQSSSSATTAGTSSATTDHNPDHTA) form a disordered region. A compositionally biased stretch (low complexity) spans 178–192 (SSSSATTAGTSSATT). Positions 218-295 (MNEPTTNIQI…NVLNSVVAVK (78 aa)) constitute a UBX domain.

It belongs to the NSFL1C family. As to quaternary structure, interacts with cdc-48.1 (via N-terminus) and cdc-48.2 (via N-terminus). Interacts with kinase air-1. Expressed in the germline (at protein level). Expressed in spermatocytes but not in mature sperm (at protein level). Ubiquitously expressed. Predominantly expressed in the spermatheca.

The protein resides in the cytoplasm. It is found in the perinuclear region. Its subcellular location is the nucleus. It localises to the cytoskeleton. The protein localises to the microtubule organizing center. The protein resides in the centrosome. In terms of biological role, ubiquitin-binding protein which acts as an adapter for ATPase cdc-48.1 and/or cdc-48.2, conferring substrate specificity. Together with ubxn-2 and ubxn-3, plays a role in hermaphrodite spermatogenesis probably by promoting the degradation of sex determination terminal factor tra-1. Probably in association with ATPase cdc-48.1 or/and cdc-48.2, regulates the centrosomal levels of kinase air-1 levels during mitotic progression by promoting air-1 removal from centrosomes in prophase. Also, regulates spindle orientation in the one-cell embryo by controlling centration and rotation of the pronuclei-centrosome complex in prophase. This chain is UBX domain-containing protein 2, found in Caenorhabditis elegans.